A 406-amino-acid chain; its full sequence is Peptidase T (406 aa).

H81 serves as a coordination point for Zn(2+). D83 is a catalytic residue. Position 142 (D142) interacts with Zn(2+). Residue E176 is the Proton acceptor of the active site. Positions 177, 199, and 381 each coordinate Zn(2+).

It belongs to the peptidase M20B family. Zn(2+) serves as cofactor.

It is found in the cytoplasm. The catalysed reaction is Release of the N-terminal residue from a tripeptide.. Its function is as follows. Cleaves the N-terminal amino acid of tripeptides. The sequence is that of Peptidase T from Streptococcus suis (strain 98HAH33).